The following is a 406-amino-acid chain: Argininosuccinate synthase (406 aa).

ATP-binding positions include 12-20 (AYSGGLDTS) and A40. 2 residues coordinate L-citrulline: Y92 and S97. Residue G122 coordinates ATP. L-aspartate-binding residues include T124, N128, and D129. An L-citrulline-binding site is contributed by N128. L-citrulline contacts are provided by R132, S181, S190, E266, and Y278.

The protein belongs to the argininosuccinate synthase family. Type 1 subfamily. As to quaternary structure, homotetramer.

The protein localises to the cytoplasm. It catalyses the reaction L-citrulline + L-aspartate + ATP = 2-(N(omega)-L-arginino)succinate + AMP + diphosphate + H(+). It participates in amino-acid biosynthesis; L-arginine biosynthesis; L-arginine from L-ornithine and carbamoyl phosphate: step 2/3. This Serratia proteamaculans (strain 568) protein is Argininosuccinate synthase.